The sequence spans 175 residues: NADH-ubiquinone oxidoreductase chain 6 (175 aa).

The next 5 membrane-spanning stretches (helical) occupy residues 1–21 (MMTYFVFILSTVFVIGFVGFS), 27–47 (VYGGVGLIISGGVGCGIVMNF), 49–69 (GSFLGLMVFLIYLGGMMVVFG), 88–108 (VVLGAFVSGLFMEMLLVLYVL), and 149–169 (YGVWLVVVTGWSLFIAVVVIM).

It belongs to the complex I subunit 6 family. Core subunit of respiratory chain NADH dehydrogenase (Complex I) which is composed of 45 different subunits.

Its subcellular location is the mitochondrion inner membrane. The enzyme catalyses a ubiquinone + NADH + 5 H(+)(in) = a ubiquinol + NAD(+) + 4 H(+)(out). Functionally, core subunit of the mitochondrial membrane respiratory chain NADH dehydrogenase (Complex I) which catalyzes electron transfer from NADH through the respiratory chain, using ubiquinone as an electron acceptor. Essential for the catalytic activity and assembly of complex I. This Pteropus dasymallus (Ryukyu flying fox) protein is NADH-ubiquinone oxidoreductase chain 6 (MT-ND6).